The sequence spans 116 residues: Small ribosomal subunit protein uS13m (116 aa).

This sequence belongs to the universal ribosomal protein uS13 family. As to quaternary structure, part of the small ribosomal subunit.

Its subcellular location is the mitochondrion. In terms of biological role, located at the top of the head of the small subunit, it contacts several helices of the 18S rRNA. This is Small ribosomal subunit protein uS13m (RPS13) from Daucus carota (Wild carrot).